Reading from the N-terminus, the 612-residue chain is Dihydroxy-acid dehydratase (612 aa).

Asp-81 provides a ligand contact to Mg(2+). A [2Fe-2S] cluster-binding site is contributed by Cys-122. Asp-123 and Lys-124 together coordinate Mg(2+). An N6-carboxylysine modification is found at Lys-124. Cys-195 provides a ligand contact to [2Fe-2S] cluster. Glu-491 is a binding site for Mg(2+). Ser-517 serves as the catalytic Proton acceptor.

This sequence belongs to the IlvD/Edd family. In terms of assembly, homodimer. [2Fe-2S] cluster serves as cofactor. Mg(2+) is required as a cofactor.

It carries out the reaction (2R)-2,3-dihydroxy-3-methylbutanoate = 3-methyl-2-oxobutanoate + H2O. The enzyme catalyses (2R,3R)-2,3-dihydroxy-3-methylpentanoate = (S)-3-methyl-2-oxopentanoate + H2O. Its pathway is amino-acid biosynthesis; L-isoleucine biosynthesis; L-isoleucine from 2-oxobutanoate: step 3/4. It participates in amino-acid biosynthesis; L-valine biosynthesis; L-valine from pyruvate: step 3/4. Its function is as follows. Functions in the biosynthesis of branched-chain amino acids. Catalyzes the dehydration of (2R,3R)-2,3-dihydroxy-3-methylpentanoate (2,3-dihydroxy-3-methylvalerate) into 2-oxo-3-methylpentanoate (2-oxo-3-methylvalerate) and of (2R)-2,3-dihydroxy-3-methylbutanoate (2,3-dihydroxyisovalerate) into 2-oxo-3-methylbutanoate (2-oxoisovalerate), the penultimate precursor to L-isoleucine and L-valine, respectively. This chain is Dihydroxy-acid dehydratase, found in Rhizobium rhizogenes (strain K84 / ATCC BAA-868) (Agrobacterium radiobacter).